Reading from the N-terminus, the 1082-residue chain is Mediator of RNA polymerase II transcription subunit 14 (1082 aa).

Disordered regions lie at residues 1–80 (MTTT…APPP) and 319–343 (EATS…NLPL). N-acetylthreonine is present on T2. S7 is subject to Phosphoserine. Residues 13–28 (NEERLSNEMHALKNRS) show a composition bias toward basic and acidic residues. Over residues 29-59 (EQNGQEQQGPVKNTQLHGPSATDPETTATQK) the composition is skewed to polar residues. A compositionally biased stretch (low complexity) spans 321–340 (TSTNGDSENNEENSSSNGNN). T1036 is modified (phosphothreonine).

This sequence belongs to the Mediator complex subunit 14 family. Component of the Mediator complex, which is composed of at least 21 subunits that form three structurally distinct submodules. The Mediator head module contains MED6, MED8, MED11, SRB4/MED17, SRB5/MED18, ROX3/MED19, SRB2/MED20 and SRB6/MED22, the middle module contains MED1, MED4, NUT1/MED5, MED7, CSE2/MED9, NUT2/MED10, SRB7/MED21 and SOH1/MED31, and the tail module contains MED2, PGD1/MED3, RGR1/MED14, GAL11/MED15 and SIN4/MED16. The head and the middle modules interact directly with RNA polymerase II, whereas the elongated tail module interacts with gene-specific regulatory proteins.

The protein resides in the nucleus. Its function is as follows. Component of the Mediator complex, a coactivator involved in the regulated transcription of nearly all RNA polymerase II-dependent genes. Mediator functions as a bridge to convey information from gene-specific regulatory proteins to the basal RNA polymerase II transcription machinery. The Mediator complex, having a compact conformation in its free form, is recruited to promoters by direct interactions with regulatory proteins and serves for the assembly of a functional preinitiation complex with RNA polymerase II and the general transcription factors. The Mediator complex unfolds to an extended conformation and partially surrounds RNA polymerase II, specifically interacting with the unphosphorylated form of the C-terminal domain (CTD) of RNA polymerase II. The Mediator complex dissociates from the RNA polymerase II holoenzyme and stays at the promoter when transcriptional elongation begins. The polypeptide is Mediator of RNA polymerase II transcription subunit 14 (RGR1) (Saccharomyces cerevisiae (strain ATCC 204508 / S288c) (Baker's yeast)).